A 130-amino-acid polypeptide reads, in one-letter code: 3-aminoacrylate deaminase RutC (130 aa).

This sequence belongs to the RutC family.

It catalyses the reaction (Z)-3-aminoacrylate + H2O + H(+) = 3-oxopropanoate + NH4(+). Functionally, involved in pyrimidine catabolism. Catalyzes the deamination of 3-aminoacrylate to malonic semialdehyde, a reaction that can also occur spontaneously. RutC may facilitate the reaction and modulate the metabolic fitness, rather than catalyzing essential functions. The chain is 3-aminoacrylate deaminase RutC from Variovorax paradoxus (strain S110).